The primary structure comprises 292 residues: GTP cyclohydrolase FolE2 (292 aa).

This sequence belongs to the GTP cyclohydrolase IV family.

It carries out the reaction GTP + H2O = 7,8-dihydroneopterin 3'-triphosphate + formate + H(+). It functions in the pathway cofactor biosynthesis; 7,8-dihydroneopterin triphosphate biosynthesis; 7,8-dihydroneopterin triphosphate from GTP: step 1/1. Converts GTP to 7,8-dihydroneopterin triphosphate. This is GTP cyclohydrolase FolE2 from Staphylococcus haemolyticus (strain JCSC1435).